A 322-amino-acid chain; its full sequence is Ferric-anguibactin-binding protein FatB (322 aa).

Residues 1–22 (MFKSTLNIAVAIVCSSLVTLTG) form the signal peptide. Cysteine 23 carries N-palmitoyl cysteine lipidation. Cysteine 23 carries S-diacylglycerol cysteine lipidation. A Fe/B12 periplasmic-binding domain is found at 57–322 (RVAALDMNEV…IDDIIKGYQS (266 aa)).

It belongs to the bacterial solute-binding protein 8 family. In terms of assembly, part of an iron transport system composed of the outer membrane receptor FatA, the periplasmic binding protein FatB and the inner membrane proteins FatC and FatD.

The protein localises to the cell inner membrane. Functionally, involved in the uptake of iron in complex with the siderophore anguibactin. Binds ferric-anguibactin in the periplasm and mediates its transport into the cytoplasm. The chain is Ferric-anguibactin-binding protein FatB from Vibrio anguillarum (strain ATCC 68554 / 775) (Listonella anguillarum).